Consider the following 860-residue polypeptide: Valine--tRNA ligase (860 aa).

Positions 53 to 63 (PNLTGILHIGH) match the 'HIGH' region motif. Residues 527 to 531 (KMSKS) carry the 'KMSKS' region motif. Lys530 contacts ATP. Positions 794–860 (QDKTKIVDKL…LKQDKLNSLK (67 aa)) form a coiled coil.

This sequence belongs to the class-I aminoacyl-tRNA synthetase family. ValS type 1 subfamily. Monomer.

The protein resides in the cytoplasm. The catalysed reaction is tRNA(Val) + L-valine + ATP = L-valyl-tRNA(Val) + AMP + diphosphate. Functionally, catalyzes the attachment of valine to tRNA(Val). As ValRS can inadvertently accommodate and process structurally similar amino acids such as threonine, to avoid such errors, it has a 'posttransfer' editing activity that hydrolyzes mischarged Thr-tRNA(Val) in a tRNA-dependent manner. This is Valine--tRNA ligase from Mycoplasmoides gallisepticum (strain R(low / passage 15 / clone 2)) (Mycoplasma gallisepticum).